Reading from the N-terminus, the 591-residue chain is Tricyclene synthase, chloroplastic (591 aa).

The transit peptide at 1 to 45 directs the protein to the chloroplast; sequence MATLLQIGSGVIYSNALRKTLRRPQSSTCIIVTETTPCNKSPTVQ. Positions 302, 339, 343, 481, and 484 each coordinate (2E)-geranyl diphosphate. Positions 339 and 343 each coordinate Mg(2+). The short motif at 339–343 is the DDXXD motif element; sequence DDIYD. 3 residues coordinate Mg(2+): asparagine 484, threonine 488, and glutamate 492.

It belongs to the terpene synthase family. Tpsb subfamily. Requires Mg(2+) as cofactor. It depends on Mn(2+) as a cofactor. As to expression, predominantly expressed in flowers but also in leaves, siliques and in stems.

The protein resides in the plastid. Its subcellular location is the chloroplast stroma. It carries out the reaction (2E)-geranyl diphosphate = beta-myrcene + diphosphate. The enzyme catalyses (2E)-geranyl diphosphate = tricyclene + diphosphate. The catalysed reaction is (2E)-geranyl diphosphate = (E)-beta-ocimene + diphosphate. It participates in secondary metabolite biosynthesis; terpenoid biosynthesis. Its function is as follows. Involved in monoterpene (C10) biosynthesis. The major product is beta-myrcene (56%) followed by (E)-beta-ocimene (20%) and minor amounts (less than 5%) of the cyclic monoterpene (-)-limonene, (+)-limonene, 2-carene and tricyclene. The sequence is that of Tricyclene synthase, chloroplastic from Arabidopsis thaliana (Mouse-ear cress).